The primary structure comprises 144 residues: C-C motif chemokine 25 (144 aa).

The N-terminal stretch at methionine 1–alanine 23 is a signal peptide. Intrachain disulfides connect cysteine 30-cysteine 58 and cysteine 31-cysteine 73. Residues lysine 98 to asparagine 144 are disordered. Residues glutamate 118–serine 127 are compositionally biased toward polar residues.

Belongs to the intercrine beta (chemokine CC) family. As to expression, specifically expressed by thymic dendritic cells. High levels in thymus and small intestine.

The protein localises to the secreted. In terms of biological role, potentially involved in T-cell development. Recombinant protein shows chemotactic activity on thymocytes, macrophages, THP-1 cells, and dendritics cells but is inactive on peripheral blood lymphocytes and neutrophils. Binds to CCR9. Binds to atypical chemokine receptor ACKR4 and mediates the recruitment of beta-arrestin (ARRB1/2) to ACKR4. The sequence is that of C-C motif chemokine 25 (Ccl25) from Mus musculus (Mouse).